We begin with the raw amino-acid sequence, 652 residues long: Ethylmalonyl-CoA mutase (652 aa).

The B12-binding domain occupies 519–647 (PLKFVVGKPG…MDIVGLVDRT (129 aa)). His532 lines the adenosylcob(III)alamin pocket.

The protein belongs to the methylmalonyl-CoA mutase family. Homodimer. Adenosylcob(III)alamin is required as a cofactor.

The catalysed reaction is (2R)-ethylmalonyl-CoA = (2S)-methylsuccinyl-CoA. Its function is as follows. Radical enzyme that catalyzes the transformation of (2R)-ethylmalonyl-CoA to (2S)-methylsuccinyl-CoA. Is involved in the ethylmalonyl-CoA pathway for acetyl-CoA assimilation required for R.sphaeroides growth on acetate as sole carbon source. Is highly specific for its substrate, ethylmalonyl-CoA, and accepts methylmalonyl-CoA only at 0.2% relative activity. The protein is Ethylmalonyl-CoA mutase of Cereibacter sphaeroides (strain ATCC 17023 / DSM 158 / JCM 6121 / CCUG 31486 / LMG 2827 / NBRC 12203 / NCIMB 8253 / ATH 2.4.1.) (Rhodobacter sphaeroides).